Consider the following 652-residue polypeptide: DNA ligase (652 aa).

Residues 29–33, 78–79, and E107 each bind NAD(+); these read DAEYD and SL. The active-site N6-AMP-lysine intermediate is the K109. R130, E164, K278, and K302 together coordinate NAD(+). The Zn(2+) site is built by C395, C398, C413, and C418. The region spanning 577-652 is the BRCT domain; that stretch reads ASDAALTGMT…IKDEAWLESL (76 aa).

It belongs to the NAD-dependent DNA ligase family. LigA subfamily. The cofactor is Mg(2+). It depends on Mn(2+) as a cofactor.

The enzyme catalyses NAD(+) + (deoxyribonucleotide)n-3'-hydroxyl + 5'-phospho-(deoxyribonucleotide)m = (deoxyribonucleotide)n+m + AMP + beta-nicotinamide D-nucleotide.. DNA ligase that catalyzes the formation of phosphodiester linkages between 5'-phosphoryl and 3'-hydroxyl groups in double-stranded DNA using NAD as a coenzyme and as the energy source for the reaction. It is essential for DNA replication and repair of damaged DNA. This Streptococcus mutans serotype c (strain ATCC 700610 / UA159) protein is DNA ligase.